A 226-amino-acid chain; its full sequence is Cytochrome c oxidase subunit 2 (226 aa).

Topologically, residues M1–F25 are mitochondrial intermembrane. A helical transmembrane segment spans residues T26 to N47. Residues N48 to E61 lie on the Mitochondrial matrix side of the membrane. A helical membrane pass occupies residues L62–K81. At I82–L226 the chain is on the mitochondrial intermembrane side. Positions 160, 195, 197, 199, 203, and 206 each coordinate Cu cation. E197 contributes to the Mg(2+) binding site.

The protein belongs to the cytochrome c oxidase subunit 2 family. As to quaternary structure, component of the cytochrome c oxidase (complex IV, CIV), a multisubunit enzyme composed of a catalytic core of 3 subunits and several supernumerary subunits. The complex exists as a monomer or a dimer and forms supercomplexes (SCs) in the inner mitochondrial membrane with ubiquinol-cytochrome c oxidoreductase (cytochrome b-c1 complex, complex III, CIII). Cu cation is required as a cofactor.

Its subcellular location is the mitochondrion inner membrane. The catalysed reaction is 4 Fe(II)-[cytochrome c] + O2 + 8 H(+)(in) = 4 Fe(III)-[cytochrome c] + 2 H2O + 4 H(+)(out). In terms of biological role, component of the cytochrome c oxidase, the last enzyme in the mitochondrial electron transport chain which drives oxidative phosphorylation. The respiratory chain contains 3 multisubunit complexes succinate dehydrogenase (complex II, CII), ubiquinol-cytochrome c oxidoreductase (cytochrome b-c1 complex, complex III, CIII) and cytochrome c oxidase (complex IV, CIV), that cooperate to transfer electrons derived from NADH and succinate to molecular oxygen, creating an electrochemical gradient over the inner membrane that drives transmembrane transport and the ATP synthase. Cytochrome c oxidase is the component of the respiratory chain that catalyzes the reduction of oxygen to water. Electrons originating from reduced cytochrome c in the intermembrane space (IMS) are transferred via the dinuclear copper A center (CU(A)) of subunit 2 and heme A of subunit 1 to the active site in subunit 1, a binuclear center (BNC) formed by heme A3 and copper B (CU(B)). The BNC reduces molecular oxygen to 2 water molecules using 4 electrons from cytochrome c in the IMS and 4 protons from the mitochondrial matrix. In Lasius sp, this protein is Cytochrome c oxidase subunit 2 (COII).